The chain runs to 188 residues: Dual specificity protein phosphatase 18 (188 aa).

Residues 19–160 (GLSQITKSLY…LIHYEFQLFG (142 aa)) enclose the Tyrosine-protein phosphatase domain. Cys-104 acts as the Phosphocysteine intermediate in catalysis.

This sequence belongs to the protein-tyrosine phosphatase family. Non-receptor class dual specificity subfamily. In terms of tissue distribution, widely expressed with highest levels in liver, brain, ovary and testis.

It localises to the cytoplasm. It is found in the nucleus. The protein resides in the mitochondrion inner membrane. It catalyses the reaction O-phospho-L-tyrosyl-[protein] + H2O = L-tyrosyl-[protein] + phosphate. The catalysed reaction is O-phospho-L-seryl-[protein] + H2O = L-seryl-[protein] + phosphate. It carries out the reaction O-phospho-L-threonyl-[protein] + H2O = L-threonyl-[protein] + phosphate. Its activity is regulated as follows. Activated by manganese ions, inhibited by iodoacetic acid. Can dephosphorylate single and diphosphorylated synthetic MAPK peptides, with preference for the phosphotyrosine and diphosphorylated forms over phosphothreonine. In vitro, dephosphorylates p-nitrophenyl phosphate (pNPP). This Homo sapiens (Human) protein is Dual specificity protein phosphatase 18 (DUSP18).